The sequence spans 141 residues: Cystatin (141 aa).

Positions 1–26 (MVRSQLPVAAPLRLLCALLLLPSATM) are cleaved as a signal peptide. In terms of domain architecture, Cystatin spans 29–129 (GGLSPRSVTD…CHFQVWSRPW (101 aa)). The Secondary area of contact signature appears at 73 to 77 (QVVSG). Disulfide bonds link Cys91-Cys107 and Cys120-Cys140.

The protein belongs to the cystatin family. As to expression, expressed at a low level by the venom gland (at protein level).

The protein resides in the secreted. Inhibits various C1 cysteine proteases including cathepsin L, papain and cathepsin B. This protein has no toxic activity and its function in the venom is unknown. It may play a role as a housekeeping or regulatory protein. This is Cystatin from Micropechis ikaheca (New Guinean small-eyed snake).